We begin with the raw amino-acid sequence, 139 residues long: Endoribonuclease YbeY (139 aa).

Zn(2+) is bound by residues H99, H103, and H109.

Belongs to the endoribonuclease YbeY family. Zn(2+) is required as a cofactor.

The protein resides in the cytoplasm. In terms of biological role, single strand-specific metallo-endoribonuclease involved in late-stage 70S ribosome quality control and in maturation of the 3' terminus of the 16S rRNA. This Sulfurimonas denitrificans (strain ATCC 33889 / DSM 1251) (Thiomicrospira denitrificans (strain ATCC 33889 / DSM 1251)) protein is Endoribonuclease YbeY.